Consider the following 734-residue polypeptide: Photosystem I P700 chlorophyll a apoprotein A2 (734 aa).

The next 8 membrane-spanning stretches (helical) occupy residues 46–69 (IFAS…FHVA), 135–158 (LYIG…LHLQ), 175–199 (LNHH…HVAL), 273–291 (IAHH…GHMY), 330–353 (LHFQ…QHMY), 369–395 (AALY…IFFI), 417–439 (AIIS…LYVH), and 517–535 (FLVH…LILV). Residues Cys-559 and Cys-568 each contribute to the [4Fe-4S] cluster site. Transmembrane regions (helical) follow at residues 575–596 (AFYL…YWHW) and 643–665 (LSVW…MFLI). The chlorophyll a site is built by His-654, Met-662, and Tyr-670. Trp-671 serves as a coordination point for phylloquinone. A helical membrane pass occupies residues 707 to 727 (LVGLVHFSVGYIFTYAAFLIA).

This sequence belongs to the PsaA/PsaB family. In terms of assembly, the PsaA/B heterodimer binds the P700 chlorophyll special pair and subsequent electron acceptors. PSI consists of a core antenna complex that captures photons, and an electron transfer chain that converts photonic excitation into a charge separation. The eukaryotic PSI reaction center is composed of at least 11 subunits. Requires P700 is a chlorophyll a/chlorophyll a' dimer, A0 is one or more chlorophyll a, A1 is one or both phylloquinones and FX is a shared 4Fe-4S iron-sulfur center. as cofactor.

The protein localises to the plastid. It is found in the chloroplast thylakoid membrane. It carries out the reaction reduced [plastocyanin] + hnu + oxidized [2Fe-2S]-[ferredoxin] = oxidized [plastocyanin] + reduced [2Fe-2S]-[ferredoxin]. In terms of biological role, psaA and PsaB bind P700, the primary electron donor of photosystem I (PSI), as well as the electron acceptors A0, A1 and FX. PSI is a plastocyanin-ferredoxin oxidoreductase, converting photonic excitation into a charge separation, which transfers an electron from the donor P700 chlorophyll pair to the spectroscopically characterized acceptors A0, A1, FX, FA and FB in turn. Oxidized P700 is reduced on the lumenal side of the thylakoid membrane by plastocyanin. This is Photosystem I P700 chlorophyll a apoprotein A2 from Gnetum parvifolium (Small-leaved jointfir).